A 131-amino-acid chain; its full sequence is Neo-calmodulin (131 aa).

4 consecutive EF-hand domains span residues 1–32 (EFKE…LGQN), 33–68 (PTEA…KMKD), 70–105 (DSEE…LGEK), and 106–131 (LTDE…YEEF). Positions 10, 12, 14, 16, 21, 46, 48, 50, 52, 57, 83, 85, 87, 89, 94, 119, 121, 123, 125, and 130 each coordinate Ca(2+).

It belongs to the calmodulin family.

This is Neo-calmodulin from Gallus gallus (Chicken).